The chain runs to 264 residues: uncharacterized protein (264 aa).

A disordered region spans residues 235 to 264 (ESSDEEDNDDDIINNDTNNDINNDDIEIKT). Residues 237–247 (SDEEDNDDDII) are compositionally biased toward acidic residues.

This is an uncharacterized protein from Acanthamoeba polyphaga mimivirus (APMV).